A 380-amino-acid chain; its full sequence is uncharacterized protein (380 aa).

Residues 1-28 form the signal peptide; it reads MQFLSDTQRMVLSRAVCASFFFFHVAVA. Positions 307 to 380 constitute an SPOR domain; the sequence is AGDEKPRGYQ…DAGYETFPLF (74 aa).

This is an uncharacterized protein from Treponema pallidum (strain Nichols).